The chain runs to 243 residues: Geranylgeranylglyceryl phosphate synthase (243 aa).

Aspartate 22 and serine 51 together coordinate Mg(2+). Sn-glycerol 1-phosphate-binding positions include 170 to 176, 201 to 202, and 223 to 224; these read YLESGSG, GG, and GT.

The protein belongs to the GGGP/HepGP synthase family. Group II subfamily. It depends on Mg(2+) as a cofactor.

The protein localises to the cytoplasm. The enzyme catalyses sn-glycerol 1-phosphate + (2E,6E,10E)-geranylgeranyl diphosphate = sn-3-O-(geranylgeranyl)glycerol 1-phosphate + diphosphate. Its pathway is membrane lipid metabolism; glycerophospholipid metabolism. Its function is as follows. Prenyltransferase that catalyzes the transfer of the geranylgeranyl moiety of geranylgeranyl diphosphate (GGPP) to the C3 hydroxyl of sn-glycerol-1-phosphate (G1P). This reaction is the first ether-bond-formation step in the biosynthesis of archaeal membrane lipids. The chain is Geranylgeranylglyceryl phosphate synthase from Picrophilus torridus (strain ATCC 700027 / DSM 9790 / JCM 10055 / NBRC 100828 / KAW 2/3).